We begin with the raw amino-acid sequence, 85 residues long: Protein RALF-like 28 (85 aa).

The N-terminal stretch at Met-1–Ala-31 is a signal peptide. Cystine bridges form between Cys-48-Cys-53 and Cys-66-Cys-72. Positions Asn-60–Ile-85 are disordered. Over residues Pro-75–Ile-85 the composition is skewed to pro residues.

The protein belongs to the plant rapid alkalinization factor (RALF) family.

Its subcellular location is the secreted. Functionally, cell signaling peptide that may regulate plant stress, growth, and development. Mediates a rapid alkalinization of extracellular space by mediating a transient increase in the cytoplasmic Ca(2+) concentration leading to a calcium-dependent signaling events through a cell surface receptor and a concomitant activation of some intracellular mitogen-activated protein kinases. The polypeptide is Protein RALF-like 28 (RALFL28) (Arabidopsis thaliana (Mouse-ear cress)).